Consider the following 119-residue polypeptide: Large ribosomal subunit protein bL20c (119 aa).

It belongs to the bacterial ribosomal protein bL20 family.

The protein localises to the plastid. Its subcellular location is the chloroplast. Binds directly to 23S ribosomal RNA and is necessary for the in vitro assembly process of the 50S ribosomal subunit. It is not involved in the protein synthesizing functions of that subunit. The polypeptide is Large ribosomal subunit protein bL20c (Lolium perenne (Perennial ryegrass)).